A 474-amino-acid chain; its full sequence is MSSEDREAQEDELLALASIYDGDEFRKAESVQGGETRIYLDLPQNFKIFVSGNSNECLQNSGFEYTICFLPPLVLNFELPPDYPSSSPPSFTLSGKWLSPTQLSALCKHLDNLWEEHRGSVVLFAWMQFLKEETLAYLNIVSPFELKIGSQKKVQRRTAQASPNTELDFGGAAGSDVDQEEIVDERAVQDVESLSNLIQEILDFDQAQQIKCFNSKLFLCSICFCEKLGSECMYFLECRHVYCKACLKDYFEIQIRDGQVQCLNCPEPKCPSVATPGQVKELVEAELFARYDRLLLQSSLDLMADVVYCPRPCCQLPVMQEPGCTMGICSSCNFAFCTLCRLTYHGVSPCKVTAEKLMDLRNEYLQADEANKRLLDQRYGKRVIQKALEEMESKEWLEKNSKSCPCCGTPIEKLDGCNKMTCTGCMQYFCWICMGSLSRANPYKHFNDPGSPCFNRLFYAVDVDDDIWEDEVED.

The RWD domain maps to 11-137 (DELLALASIY…QFLKEETLAY (127 aa)). The D-box motif lies at 37-45 (RIYLDLPQN). Residues 216–457 (KLFLCSICFC…DPGSPCFNRL (242 aa)) form a TRIAD supradomain region. The Zn(2+) site is built by cysteine 220, cysteine 223, cysteine 238, histidine 240, cysteine 243, cysteine 246, cysteine 265, cysteine 270, cysteine 309, cysteine 314, cysteine 329, cysteine 332, cysteine 337, cysteine 340, and histidine 345. The RING-type 1 zinc finger occupies 220 to 270 (CSICFCEKLGSECMYFLECRHVYCKACLKDYFEIQIRDGQVQCLNCPEPKC). Residues 289–350 (ARYDRLLLQS…RLTYHGVSPC (62 aa)) form an IBR-type zinc finger. Serine 348 carries the phosphoserine modification. Cysteine 350 lines the Zn(2+) pocket. The stretch at 351 to 395 (KVTAEKLMDLRNEYLQADEANKRLLDQRYGKRVIQKALEEMESKE) forms a coiled coil. The interval 361 to 474 (RNEYLQADEA…DDIWEDEVED (114 aa)) is interaction with androgen receptor. Zn(2+) contacts are provided by cysteine 404 and cysteine 407. The RING-type 2; atypical zinc-finger motif lies at 404–433 (CPCCGTPIEKLDGCNKMTCTGCMQYFCWIC). Cysteine 417 is an active-site residue. 6 residues coordinate Zn(2+): cysteine 422, cysteine 425, cysteine 430, cysteine 433, histidine 445, and cysteine 453.

It belongs to the RBR family. RNF14 subfamily. As to quaternary structure, interacts with GCN1; interaction takes place in response to ribosome collisions and is required for ubiquitination of EEF1A1/eEF1A. Interacts with the ubiquitin-conjugating enzymes UBE2E1 and UBE2E2. Interacts with AR/androgen receptor. Interacts with TCF7/TCF1, TCF7L1/TCF3 and TCF7L2/TCF4; promoting Wnt signaling. Post-translationally, RING-type zinc finger-dependent and UBE2E2-dependent autoubiquitination. Widely expressed.

It localises to the cytoplasm. The protein localises to the nucleus. The catalysed reaction is [E2 ubiquitin-conjugating enzyme]-S-ubiquitinyl-L-cysteine + [acceptor protein]-L-lysine = [E2 ubiquitin-conjugating enzyme]-L-cysteine + [acceptor protein]-N(6)-ubiquitinyl-L-lysine.. Its pathway is protein modification; protein ubiquitination. Its function is as follows. E3 ubiquitin-protein ligase that plays a key role in the RNF14-RNF25 translation quality control pathway, a pathway that takes place when a ribosome has stalled during translation, and which promotes ubiquitination and degradation of translation factors on stalled ribosomes. Recruited to stalled ribosomes by the ribosome collision sensor GCN1 and mediates 'Lys-6'-linked ubiquitination of target proteins, leading to their degradation. Mediates ubiquitination of EEF1A1/eEF1A and ETF1/eRF1 translation factors on stalled ribosomes, leading to their degradation. Also catalyzes ubiquitination of ribosomal proteins RPL0, RPL1, RPL12, RPS13 and RPS17. Specifically required to resolve RNA-protein cross-links caused by reactive aldehydes, which trigger translation stress by stalling ribosomes: acts by catalying 'Lys-6'-linked ubiquitination of RNA-protein cross-links, leading to their removal by the ATP-dependent unfoldase VCP and subsequent degradation by the proteasome. Independently of its function in the response to stalled ribosomes, acts as a regulator of transcription in Wnt signaling via its interaction with TCF transcription factors (TCF7/TCF1, TCF7L1/TCF3 and TCF7L2/TCF4). May also play a role as a coactivator for androgen- and, to a lesser extent, progesterone-dependent transcription. The polypeptide is E3 ubiquitin-protein ligase RNF14 (Homo sapiens (Human)).